Here is a 121-residue protein sequence, read N- to C-terminus: uncharacterized protein (121 aa).

The N-terminal stretch at 1–19 is a signal peptide; the sequence is MKKFALATIFALATTSAFA.

The protein to E.coli YgiW.

The protein localises to the periplasm. This is an uncharacterized protein from Haemophilus influenzae (strain ATCC 51907 / DSM 11121 / KW20 / Rd).